Reading from the N-terminus, the 293-residue chain is Movement protein BC1 (293 aa).

This sequence belongs to the begomovirus movement protein BC1 family. In terms of assembly, binds to dimeric supercoiled plasmid DNA. In terms of processing, phosphorylated.

It is found in the host cell membrane. Its subcellular location is the host microsome membrane. It localises to the host endoplasmic reticulum membrane. Functionally, transports viral genome to neighboring plant cells directly through plasmosdesmata, without any budding. The movement protein allows efficient cell to cell propagation, by bypassing the host cell wall barrier. Begomovirus genome is shuttled out of nucleus by Nuclear shuttle protein (NSP) and the movement protein transports the DNA-NSP complex to cell plasmodesmata and facilitates further movement across the cell wall. The polypeptide is Movement protein BC1 (Cucurbita moschata (Winter crookneck squash)).